The primary structure comprises 172 residues: Nicotinamide-nucleotide adenylyltransferase (172 aa).

This sequence belongs to the archaeal NMN adenylyltransferase family.

The protein localises to the cytoplasm. The catalysed reaction is beta-nicotinamide D-ribonucleotide + ATP + H(+) = diphosphate + NAD(+). The protein operates within cofactor biosynthesis; NAD(+) biosynthesis; NAD(+) from nicotinamide D-ribonucleotide: step 1/1. This chain is Nicotinamide-nucleotide adenylyltransferase, found in Methanococcus vannielii (strain ATCC 35089 / DSM 1224 / JCM 13029 / OCM 148 / SB).